A 212-amino-acid polypeptide reads, in one-letter code: Large ribosomal subunit protein uL3 (212 aa).

Positions 140 to 155 are enriched in polar residues; that stretch reads SVSHRAIGSTGQNQSP. Residues 140–166 form a disordered region; it reads SVSHRAIGSTGQNQSPGKVFKGKKMPG. Gln-153 carries the N5-methylglutamine modification.

It belongs to the universal ribosomal protein uL3 family. As to quaternary structure, part of the 50S ribosomal subunit. Forms a cluster with proteins L14 and L19. Methylated by PrmB.

One of the primary rRNA binding proteins, it binds directly near the 3'-end of the 23S rRNA, where it nucleates assembly of the 50S subunit. The chain is Large ribosomal subunit protein uL3 from Psychrobacter cryohalolentis (strain ATCC BAA-1226 / DSM 17306 / VKM B-2378 / K5).